Reading from the N-terminus, the 888-residue chain is Probable disease resistance protein At5g63020 (888 aa).

Residues 22–66 are a coiled coil; that stretch reads LNRNGDYIHGLEENLTALQRALEQIEQRREDLLRKILSEERRGLQ. Positions 139–442 constitute an NB-ARC domain; it reads AERVDAARVE…GEGFIDRNKG (304 aa). 181-188 provides a ligand contact to ATP; the sequence is GMGGVGKT. LRR repeat units follow at residues 512–533, 534–555, 558–580, 582–604, and 605–627; these read VARRVSLMFNNIESIRDAPESP, QLITLLLRKNFLGHISSSFFRL, MLVVLDLSMNRDLRHLPNEISEC, SLQYLSLSRTRIRIWPAGLVELR, and KLLYLNLEYTRMVESICGISGLT.

The protein belongs to the disease resistance NB-LRR family.

Its function is as follows. Probable disease resistance protein. This Arabidopsis thaliana (Mouse-ear cress) protein is Probable disease resistance protein At5g63020.